Consider the following 160-residue polypeptide: Small ribosomal subunit protein uS7 (160 aa).

The protein belongs to the universal ribosomal protein uS7 family. Part of the 30S ribosomal subunit. Contacts proteins S9 and S11.

Its function is as follows. One of the primary rRNA binding proteins, it binds directly to 16S rRNA where it nucleates assembly of the head domain of the 30S subunit. Is located at the subunit interface close to the decoding center, probably blocks exit of the E-site tRNA. The protein is Small ribosomal subunit protein uS7 of Rickettsia typhi (strain ATCC VR-144 / Wilmington).